A 58-amino-acid polypeptide reads, in one-letter code: Large ribosomal subunit protein uL30 (58 aa).

It belongs to the universal ribosomal protein uL30 family. As to quaternary structure, part of the 50S ribosomal subunit.

This chain is Large ribosomal subunit protein uL30, found in Psychromonas ingrahamii (strain DSM 17664 / CCUG 51855 / 37).